The chain runs to 420 residues: uncharacterized protein (420 aa).

This sequence belongs to the mimivirus R160 family.

It is found in the virion. This is an uncharacterized protein from Acanthamoeba polyphaga mimivirus (APMV).